The following is a 439-amino-acid chain: Oxysterol-binding protein 6 (439 aa).

Disordered regions lie at residues 1–40 (MSAK…SGAD) and 409–439 (ESST…QTTN). Polar residues-rich tracts occupy residues 409-419 (ESSTPNLSKVD) and 429-439 (PVDNSIPQTTN).

The protein belongs to the OSBP family.

In Dictyostelium discoideum (Social amoeba), this protein is Oxysterol-binding protein 6 (osbF).